Consider the following 89-residue polypeptide: Small ribosomal subunit protein uS15 (89 aa).

The segment covering 1-21 (MAITQERKNQLISEFKTHESD) has biased composition (basic and acidic residues). Residues 1–23 (MAITQERKNQLISEFKTHESDTG) are disordered.

Belongs to the universal ribosomal protein uS15 family. As to quaternary structure, part of the 30S ribosomal subunit. Forms a bridge to the 50S subunit in the 70S ribosome, contacting the 23S rRNA.

In terms of biological role, one of the primary rRNA binding proteins, it binds directly to 16S rRNA where it helps nucleate assembly of the platform of the 30S subunit by binding and bridging several RNA helices of the 16S rRNA. Functionally, forms an intersubunit bridge (bridge B4) with the 23S rRNA of the 50S subunit in the ribosome. This Bacillus velezensis (strain DSM 23117 / BGSC 10A6 / LMG 26770 / FZB42) (Bacillus amyloliquefaciens subsp. plantarum) protein is Small ribosomal subunit protein uS15.